The chain runs to 451 residues: Ubiquitin hydrolase B (451 aa).

A USP domain is found at 19–450; it reads RGLINTSNTC…EAYLLLYQLV (432 aa). Residues 83-115 show a composition bias toward low complexity; that stretch reads NNSNSTTTTSSSSTTATTTSTSNNNKSQTPTSP. Residues 83–154 form a disordered region; sequence NNSNSTTTTS…PPINPKHFND (72 aa). The segment covering 116–135 has biased composition (polar residues); the sequence is IQQHHQSQTNGLSNQPSVAT. The active-site Nucleophile is the histidine 399. Histidine 408 (proton acceptor) is an active-site residue.

This sequence belongs to the peptidase C19 family. In terms of assembly, interacts with mkkA (via F-box/WD40 domains).

The enzyme catalyses Thiol-dependent hydrolysis of ester, thioester, amide, peptide and isopeptide bonds formed by the C-terminal Gly of ubiquitin (a 76-residue protein attached to proteins as an intracellular targeting signal).. Functionally, required for proper prespore cell patterning. Plays a role in stabilizing mkkA by preventing it from being targeted for degradation. ubcB and ubpB differentially control ubiquitination/deubiquitination and degradation of mkkA in a cell-type-specific and temporally regulated manner. This Dictyostelium discoideum (Social amoeba) protein is Ubiquitin hydrolase B (ubpB).